The sequence spans 477 residues: Probable periplasmic serine endoprotease DegP-like (477 aa).

A signal peptide spans 1–27 (MSIPRLKSYLMMFAAVLMLGQVLTAQA). Residues histidine 117, aspartate 147, and serine 220 each act as charge relay system in the active site. Residues 218-220 (GNS) and 275-279 (LGVVI) contribute to the substrate site. PDZ domains follow at residues 264–355 (LKKD…IRNG) and 361–466 (DISV…LRQG).

This sequence belongs to the peptidase S1C family.

It localises to the periplasm. It carries out the reaction Acts on substrates that are at least partially unfolded. The cleavage site P1 residue is normally between a pair of hydrophobic residues, such as Val-|-Val.. In terms of biological role, might be efficient in the degradation of transiently denatured and unfolded proteins which accumulate in the periplasm following stress conditions. The polypeptide is Probable periplasmic serine endoprotease DegP-like (Pseudomonas putida (strain ATCC 700007 / DSM 6899 / JCM 31910 / BCRC 17059 / LMG 24140 / F1)).